The primary structure comprises 215 residues: Adenylate kinase (215 aa).

Residue G10–T15 participates in ATP binding. Residues S30 to V59 are NMP. AMP contacts are provided by residues T31, R36, L57–V59, G85–R88, and Q92. The tract at residues S126–D163 is LID. R127 lines the ATP pocket. Zn(2+)-binding residues include C130 and C133. V136–Y137 contacts ATP. Zn(2+) is bound by residues C150 and C153. AMP is bound by residues R160 and R171. L199 contacts ATP.

Belongs to the adenylate kinase family. Monomer.

It localises to the cytoplasm. The enzyme catalyses AMP + ATP = 2 ADP. The protein operates within purine metabolism; AMP biosynthesis via salvage pathway; AMP from ADP: step 1/1. Its function is as follows. Catalyzes the reversible transfer of the terminal phosphate group between ATP and AMP. Plays an important role in cellular energy homeostasis and in adenine nucleotide metabolism. This is Adenylate kinase from Kosmotoga olearia (strain ATCC BAA-1733 / DSM 21960 / TBF 19.5.1).